The primary structure comprises 753 residues: Polyadenylate-binding protein, cytoplasmic and nuclear (753 aa).

Residues 1–26 (MSAEVSTTPAADNTVNGTPEATNAAA) are compositionally biased toward polar residues. Residues 1–52 (MSAEVSTTPAADNTVNGTPEATNAAATSAPEVTAVESASPSTTPSASQPHSA) form a disordered region. Positions 37–52 (SASPSTTPSASQPHSA) are enriched in low complexity. 4 consecutive RRM domains span residues 52–130 (ASLY…WSQR), 140–217 (GNVF…HHIS), 233–310 (TNVY…RAQK), and 336–460 (VNLY…LAQR). Disordered stretches follow at residues 367-417 (VMRD…TEKK) and 602-645 (MGQG…REEV). The span at 379-417 (ESEKEKEKESNKENEKEGEEKTEEKPKESEEEPKKTEKK) shows a compositional bias: basic and acidic residues. Residues 605–631 (GIRGPGYGQGRGGAPVQGGPRPQGGRG) are compositionally biased toward gly residues. Residues 648 to 725 (TGGLTAQTLS…ALSVYDEYMK (78 aa)) enclose the PABC domain. The segment at 728–753 (GEGEAPAESAKPKEDAAETATEENKS) is disordered. Residues 737–753 (AKPKEDAAETATEENKS) show a composition bias toward basic and acidic residues.

This sequence belongs to the polyadenylate-binding protein type-1 family.

It is found in the cytoplasm. Its subcellular location is the nucleus. Functionally, binds the poly(A) tail of mRNA. Appears to be an important mediator of the multiple roles of the poly(A) tail in mRNA biogenesis, stability and translation. In the nucleus, involved in both mRNA cleavage and polyadenylation. Is also required for efficient mRNA export to the cytoplasm. Acts in concert with a poly(A)-specific nuclease (PAN) to affect poly(A) tail shortening, which may occur concomitantly with either nucleocytoplasmic mRNA transport or translational initiation. In the cytoplasm, stimulates translation initiation and regulates mRNA decay through translation termination-coupled poly(A) shortening, probably mediated by PAN. The chain is Polyadenylate-binding protein, cytoplasmic and nuclear (pab1) from Aspergillus fumigatus (strain ATCC MYA-4609 / CBS 101355 / FGSC A1100 / Af293) (Neosartorya fumigata).